The following is a 1690-amino-acid chain: DNA-directed RNA polymerase subunit beta' (1690 aa).

The Zn(2+) site is built by Cys-63, Cys-65, Cys-78, and Cys-81. Asp-753, Asp-755, and Asp-757 together coordinate Mg(2+). Positions 1107, 1295, 1302, and 1305 each coordinate Zn(2+).

It belongs to the RNA polymerase beta' chain family. The RNAP catalytic core consists of 2 alpha, 1 beta, 1 beta' and 1 omega subunit. When a sigma factor is associated with the core the holoenzyme is formed, which can initiate transcription. The cofactor is Mg(2+). Zn(2+) serves as cofactor.

It catalyses the reaction RNA(n) + a ribonucleoside 5'-triphosphate = RNA(n+1) + diphosphate. Its function is as follows. DNA-dependent RNA polymerase catalyzes the transcription of DNA into RNA using the four ribonucleoside triphosphates as substrates. The chain is DNA-directed RNA polymerase subunit beta' from Thermotoga sp. (strain RQ2).